Reading from the N-terminus, the 341-residue chain is Glycerol-3-phosphate dehydrogenase [NAD(P)+] (341 aa).

NADPH is bound by residues Ser-14, Phe-15, Arg-35, and Lys-108. Lys-108 and Gly-136 together coordinate sn-glycerol 3-phosphate. Ala-140 is an NADPH binding site. 5 residues coordinate sn-glycerol 3-phosphate: Lys-191, Asp-244, Ser-254, Arg-255, and Asn-256. Lys-191 acts as the Proton acceptor in catalysis. An NADPH-binding site is contributed by Arg-255. Positions 279 and 281 each coordinate NADPH.

The protein belongs to the NAD-dependent glycerol-3-phosphate dehydrogenase family.

It is found in the cytoplasm. It catalyses the reaction sn-glycerol 3-phosphate + NAD(+) = dihydroxyacetone phosphate + NADH + H(+). The enzyme catalyses sn-glycerol 3-phosphate + NADP(+) = dihydroxyacetone phosphate + NADPH + H(+). The protein operates within membrane lipid metabolism; glycerophospholipid metabolism. Catalyzes the reduction of the glycolytic intermediate dihydroxyacetone phosphate (DHAP) to sn-glycerol 3-phosphate (G3P), the key precursor for phospholipid synthesis. The polypeptide is Glycerol-3-phosphate dehydrogenase [NAD(P)+] (Pseudomonas syringae pv. tomato (strain ATCC BAA-871 / DC3000)).